Here is a 181-residue protein sequence, read N- to C-terminus: Ribosome maturation factor RimM (181 aa).

The PRC barrel domain maps to 98–172 (EDEFYFEDLI…RIVIPELSLW (75 aa)).

Belongs to the RimM family. In terms of assembly, binds ribosomal protein uS19.

It localises to the cytoplasm. An accessory protein needed during the final step in the assembly of 30S ribosomal subunit, possibly for assembly of the head region. Essential for efficient processing of 16S rRNA. May be needed both before and after RbfA during the maturation of 16S rRNA. It has affinity for free ribosomal 30S subunits but not for 70S ribosomes. The protein is Ribosome maturation factor RimM of Hyphomonas neptunium (strain ATCC 15444).